Reading from the N-terminus, the 779-residue chain is Protocadherin beta-8 (779 aa).

The N-terminal stretch at 1 to 28 (METALTKTPEKRQVIFLAILLLLWEASS) is a signal peptide. The Extracellular portion of the chain corresponds to 29-690 (EAISYSMPEE…QEEDMLTLYL (662 aa)). Cadherin domains follow at residues 75–133 (LQLD…FPEF), 134–242 (PDTE…APQF), 243–346 (LQSL…APKL), 347–450 (TISS…APAF), and 451–560 (TQTS…APFV). A disulfide bond links Cys96 and Cys102. The N-linked (GlcNAc...) asparagine glycan is linked to Asn169. An O-linked (Man) serine glycan is attached at Ser223. 2 O-linked (Man) threonine glycosylation sites follow: Thr225 and Thr227. Asn417 is a glycosylation site (N-linked (GlcNAc...) asparagine). Residue Asn566 is glycosylated (N-linked (GlcNAc...) asparagine). Positions 575-675 (LPRAAEPGYL…SQPYLPLPEV (101 aa)) constitute a Cadherin 6 domain. A helical membrane pass occupies residues 691–711 (VIALASVSSLFLLSVLLFVGV). The Cytoplasmic segment spans residues 712 to 779 (KLCKKAREAS…IIPSSLLQDS (68 aa)).

In terms of assembly, forms homodimers in trans (molecules expressed by two different cells). Forms promiscuous heterodimers in cis (at the plasma membrane of the same cell) with other protocadherins.

It localises to the cell membrane. Its function is as follows. Calcium-dependent cell-adhesion protein involved in cells self-recognition and non-self discrimination. Thereby, it is involved in the establishment and maintenance of specific neuronal connections in the brain. This is Protocadherin beta-8 from Mus musculus (Mouse).